The primary structure comprises 76 residues: Large ribosomal subunit protein bL31 (76 aa).

4 residues coordinate Zn(2+): cysteine 16, cysteine 18, cysteine 37, and cysteine 40.

Belongs to the bacterial ribosomal protein bL31 family. Type A subfamily. In terms of assembly, part of the 50S ribosomal subunit. Zn(2+) is required as a cofactor.

Functionally, binds the 23S rRNA. The sequence is that of Large ribosomal subunit protein bL31 from Solibacter usitatus (strain Ellin6076).